The primary structure comprises 250 residues: Acidic leucine-rich nuclear phosphoprotein 32 family member E (250 aa).

Phosphoserine is present on serine 8. 3 LRR repeats span residues 43-64 (ELEF…PSLP), 65-87 (KLRK…AEKC), and 89-110 (NLTY…EALQ). The 39-residue stretch at 123-161 (CEITTLEDYRESIFELLPQVTYLDGFDAEDNEAPDSEAD) folds into the LRRCT domain. 3 stretches are compositionally biased toward acidic residues: residues 149 to 171 (DAED…DGDE), 178 to 191 (EYEE…EGSE), and 205 to 227 (IQDE…EEEA). The segment at 149–250 (DAEDNEAPDS…EGEDDDEDDD (102 aa)) is disordered. Residues 194–247 (EVGLSYLMKEDIQDEEDDDDYVEEEEEEGGEEEADVRGEKRKREAEDEGEDDDE) form a ZID domain region. A compositionally biased stretch (basic and acidic residues) spans 228-238 (DVRGEKRKREA). A compositionally biased stretch (acidic residues) spans 239 to 250 (EDEGEDDDEDDD).

This sequence belongs to the ANP32 family. As to quaternary structure, component of a SWR1-like complex. Interacts with H2A.Z/H2AZ1. Phosphorylated. The phosphorylation is nuclear localization signal (NLS)-dependent.

The protein localises to the cytoplasm. It localises to the nucleus. In terms of biological role, histone chaperone that specifically mediates the genome-wide removal of histone H2A.Z/H2AZ1 from the nucleosome: removes H2A.Z/H2AZ1 from its normal sites of deposition, especially from enhancer and insulator regions. Not involved in deposition of H2A.Z/H2AZ1 in the nucleosome. May stabilize the evicted H2A.Z/H2AZ1-H2B dimer, thus shifting the equilibrium towards dissociation and the off-chromatin state. Inhibits activity of protein phosphatase 2A (PP2A). Does not inhibit protein phosphatase 1. May play a role in cerebellar development and synaptogenesis. This is Acidic leucine-rich nuclear phosphoprotein 32 family member E (anp32e) from Danio rerio (Zebrafish).